The primary structure comprises 227 residues: ATP-dependent dethiobiotin synthetase BioD (227 aa).

13–18 is an ATP binding site; the sequence is DIGKTY. T17 provides a ligand contact to Mg(2+). K38 is an active-site residue. S42 lines the substrate pocket. ATP contacts are provided by residues D55, 116–119, and 179–180; these read EGSG and NN. Mg(2+) contacts are provided by D55 and E116.

This sequence belongs to the dethiobiotin synthetase family. Homodimer. Mg(2+) serves as cofactor.

The protein localises to the cytoplasm. It carries out the reaction (7R,8S)-7,8-diammoniononanoate + CO2 + ATP = (4R,5S)-dethiobiotin + ADP + phosphate + 3 H(+). It functions in the pathway cofactor biosynthesis; biotin biosynthesis; biotin from 7,8-diaminononanoate: step 1/2. In terms of biological role, catalyzes a mechanistically unusual reaction, the ATP-dependent insertion of CO2 between the N7 and N8 nitrogen atoms of 7,8-diaminopelargonic acid (DAPA, also called 7,8-diammoniononanoate) to form a ureido ring. This Clostridium botulinum (strain ATCC 19397 / Type A) protein is ATP-dependent dethiobiotin synthetase BioD.